An 86-amino-acid polypeptide reads, in one-letter code: MDPYKVIIRPVVTEKAVAMIENENKLTFIVDRRATKQDIKRAVEAMFDVKVEKVNTLITMRGEKKAYVKLKPEYSASEIAARIGLF.

Belongs to the universal ribosomal protein uL23 family. As to quaternary structure, part of the 50S ribosomal subunit. Contacts protein L29.

Binds to 23S rRNA. One of the proteins that surrounds the polypeptide exit tunnel on the outside of the ribosome. This Thermococcus onnurineus (strain NA1) protein is Large ribosomal subunit protein uL23.